A 457-amino-acid chain; its full sequence is Metacaspase-1 (457 aa).

The disordered stretch occupies residues 1–149 (MSWNQYPGGG…PQLQGQGGQS (149 aa)). Gly residues predominate over residues 7-18 (PGGGHHQQGGYG). Residues 20–56 (RPPPPQWAQQGPPPPPNMGYRPPPPPQAYYNNPPPPQ) are compositionally biased toward pro residues. The segment covering 57–83 (QYQRPAPQQNGYQQGGYQQQQQSQGNY) has biased composition (low complexity). Residues histidine 247 and cysteine 303 contribute to the active site.

The protein belongs to the peptidase C14B family.

Its function is as follows. Involved in cell death (apoptosis). The protein is Metacaspase-1 (MCA1) of Cryptococcus neoformans var. neoformans serotype D (strain JEC21 / ATCC MYA-565) (Filobasidiella neoformans).